Consider the following 223-residue polypeptide: Cytidine deaminase 3 (223 aa).

CMP/dCMP-type deaminase domains lie at 21–154 and 184–223; these read TEPM…FSPD and SDCS…WYRG. Substrate is bound at residue 62–64; sequence NVE. His75 serves as a coordination point for Zn(2+). The Proton donor role is filled by Glu77. Residues Cys110 and Cys113 each contribute to the Zn(2+) site.

It belongs to the cytidine and deoxycytidylate deaminase family. Homodimer. It depends on Zn(2+) as a cofactor.

The catalysed reaction is cytidine + H2O + H(+) = uridine + NH4(+). The enzyme catalyses 2'-deoxycytidine + H2O + H(+) = 2'-deoxyuridine + NH4(+). This enzyme scavenges exogenous and endogenous cytidine and 2'-deoxycytidine for UMP synthesis. This Arabidopsis thaliana (Mouse-ear cress) protein is Cytidine deaminase 3 (CDA3).